A 313-amino-acid polypeptide reads, in one-letter code: Beta-ketoacyl-[acyl-carrier-protein] synthase III (313 aa).

Catalysis depends on residues C112 and H238. The interval 239-243 (QANIR) is ACP-binding. N268 is an active-site residue.

This sequence belongs to the thiolase-like superfamily. FabH family. Homodimer.

The protein resides in the cytoplasm. It carries out the reaction malonyl-[ACP] + acetyl-CoA + H(+) = 3-oxobutanoyl-[ACP] + CO2 + CoA. Its pathway is lipid metabolism; fatty acid biosynthesis. Catalyzes the condensation reaction of fatty acid synthesis by the addition to an acyl acceptor of two carbons from malonyl-ACP. Catalyzes the first condensation reaction which initiates fatty acid synthesis and may therefore play a role in governing the total rate of fatty acid production. Possesses both acetoacetyl-ACP synthase and acetyl transacylase activities. Its substrate specificity determines the biosynthesis of branched-chain and/or straight-chain of fatty acids. In Staphylococcus aureus (strain COL), this protein is Beta-ketoacyl-[acyl-carrier-protein] synthase III.